The chain runs to 161 residues: Nucleotide-binding protein Pnec_0318 (161 aa).

It belongs to the YajQ family.

Its function is as follows. Nucleotide-binding protein. The protein is Nucleotide-binding protein Pnec_0318 of Polynucleobacter necessarius subsp. necessarius (strain STIR1).